Reading from the N-terminus, the 305-residue chain is MSFPDITPSLKATMPDLRGRLLANQSLAELTWFRVGGPAQVLFTPADEDDLAYFLAHLASDIPVYVVGVGSNLIVRDGGIAGVVIRLAPRAFGEASASGDIVTAGAAALDKRVAEVAASANIGGLEFYFGIPGTIGGALRMNAGANGGETKDVLIEARGVGRDGTKHVFSNADMKFVYRNSGVDPSIIFTSARFRGEVKDADAIRARMAEVQSHRETAQPIREKTGGSTFKNPPGHSAWKLVDAAGCRGLRVGGAQVSEMHCNFLINTGDATAHDIETLGETVRARVKANSGIELHWEIKRIGVS.

The FAD-binding PCMH-type domain occupies 34–199 (RVGGPAQVLF…TSARFRGEVK (166 aa)). Residue arginine 179 is part of the active site. Catalysis depends on serine 228, which acts as the Proton donor. Glutamate 298 is an active-site residue.

This sequence belongs to the MurB family. It depends on FAD as a cofactor.

The protein resides in the cytoplasm. The catalysed reaction is UDP-N-acetyl-alpha-D-muramate + NADP(+) = UDP-N-acetyl-3-O-(1-carboxyvinyl)-alpha-D-glucosamine + NADPH + H(+). Its pathway is cell wall biogenesis; peptidoglycan biosynthesis. In terms of biological role, cell wall formation. This is UDP-N-acetylenolpyruvoylglucosamine reductase from Bradyrhizobium diazoefficiens (strain JCM 10833 / BCRC 13528 / IAM 13628 / NBRC 14792 / USDA 110).